Here is a 380-residue protein sequence, read N- to C-terminus: Lipid-A-disaccharide synthase (380 aa).

This sequence belongs to the LpxB family.

The enzyme catalyses a lipid X + a UDP-2-N,3-O-bis[(3R)-3-hydroxyacyl]-alpha-D-glucosamine = a lipid A disaccharide + UDP + H(+). It functions in the pathway bacterial outer membrane biogenesis; LPS lipid A biosynthesis. In terms of biological role, condensation of UDP-2,3-diacylglucosamine and 2,3-diacylglucosamine-1-phosphate to form lipid A disaccharide, a precursor of lipid A, a phosphorylated glycolipid that anchors the lipopolysaccharide to the outer membrane of the cell. The protein is Lipid-A-disaccharide synthase of Pseudomonas syringae pv. syringae (strain B728a).